The sequence spans 343 residues: Selenide, water dikinase (343 aa).

Residue U15 is part of the active site. Residue U15 is a non-standard amino acid, selenocysteine. Residues K18 and 45–47 each bind ATP; that span reads TAD. Residue D48 coordinates Mg(2+). Residues D65, D88, and 135–137 contribute to the ATP site; that span reads GHT. Residue D88 participates in Mg(2+) binding. D223 lines the Mg(2+) pocket.

The protein belongs to the selenophosphate synthase 1 family. Class I subfamily. Homodimer. The cofactor is Mg(2+).

The enzyme catalyses hydrogenselenide + ATP + H2O = selenophosphate + AMP + phosphate + 2 H(+). In terms of biological role, synthesizes selenophosphate from selenide and ATP. The protein is Selenide, water dikinase of Carboxydothermus hydrogenoformans (strain ATCC BAA-161 / DSM 6008 / Z-2901).